Reading from the N-terminus, the 81-residue chain is Mipartoxin-1A (81 aa).

An N-terminal signal peptide occupies residues 1–21 (MKTLLLTLVVVTIVCLDLGNS). Disulfide bonds link C24–C42, C35–C61, C65–C73, and C74–C79.

Belongs to the three-finger toxin family. Short-chain subfamily. As to expression, expressed by the venom gland.

The protein localises to the secreted. Functionally, snake venom neurotoxin that blocks neuromuscular transmission, presenting a postsynaptic action through the nicotinic acetylcholine receptor (nAChR). Has no cytotoxic activity. The sequence is that of Mipartoxin-1A from Micrurus mipartitus (Red-tailed coral snake).